Here is a 468-residue protein sequence, read N- to C-terminus: MNKGRVTQIMGPVVDVKFDGGKLPEIYNALTVKQSNENGELNLTFEVALHLGDDTVRTVAMSSTDGLVRGTEVEDTGKAISVPVGDATLGRVFNVLGDAIDLDGEVPADVRRDPIHRQAPAFEELSTKVEILETGIKVVDLLAPYIKGGKIGLFGGAGVGKTVLIQELINNIAQEHGGISVFAGVGERTREGNDLYHEMSDSGVIKKTAMVFGQMNEPPGARQRVALTGLTMAEYFRDEQGQDVLLFIDNIFRFTQAGSEVSALLGRMPSAVGYQPTLATEMGQLQERITSTNKGSITSIQAVYVPADDYTDPAPATTFAHLDATTNLERRLTQMGIYPAVDPLASTSRALSPEIVGEEHYEVARQVQQTLQRYKELQDIIAILGMDELSEEDKLVVHRARRIQFFLSQNFHVAEQFTGQKGSYVPVKDTVRGFKEILEGKYDDLPEDAFRLVGGIEEVIENAKKMMA.

155–162 (GGAGVGKT) contacts ATP.

This sequence belongs to the ATPase alpha/beta chains family. As to quaternary structure, F-type ATPases have 2 components, CF(1) - the catalytic core - and CF(0) - the membrane proton channel. CF(1) has five subunits: alpha(3), beta(3), gamma(1), delta(1), epsilon(1). CF(0) has three main subunits: a(1), b(2) and c(9-12). The alpha and beta chains form an alternating ring which encloses part of the gamma chain. CF(1) is attached to CF(0) by a central stalk formed by the gamma and epsilon chains, while a peripheral stalk is formed by the delta and b chains.

The protein resides in the cell membrane. The enzyme catalyses ATP + H2O + 4 H(+)(in) = ADP + phosphate + 5 H(+)(out). Produces ATP from ADP in the presence of a proton gradient across the membrane. The catalytic sites are hosted primarily by the beta subunits. This is ATP synthase subunit beta from Bacillus cereus (strain ATCC 10987 / NRS 248).